Here is a 354-residue protein sequence, read N- to C-terminus: UPF0283 membrane protein HI_0043 (354 aa).

The next 3 membrane-spanning stretches (helical) occupy residues 57 to 77, 87 to 107, and 211 to 231; these read LLKFTALLFGLATVAQSVQWI, IYLAFALVSLIIILLGIKEII, and ESAVIVAISPLAVVDMFFIAW.

Belongs to the UPF0283 family.

It is found in the cell inner membrane. This chain is UPF0283 membrane protein HI_0043, found in Haemophilus influenzae (strain ATCC 51907 / DSM 11121 / KW20 / Rd).